The following is a 622-amino-acid chain: WD repeat-containing protein 46 (622 aa).

The segment at 1-135 is disordered; it reads METAPKPGRG…KTQSKLEKAE (135 aa). At S41 the chain carries Phosphoserine. Over residues 106-118 the composition is skewed to basic and acidic residues; sequence EEARKFCRIDKSK. WD repeat units follow at residues 192-233, 234-271, 314-353, 356-395, and 398-435; these read LRQF…CEIN, VMEAVRDIHFLHSEALLAVAQNRWLYIYDNQGIELHCI, VRAGRLSVMAQNPYNAVIHLGHSNGTVSLWSPAVKEPLAK, CHRGGVRAVAVDSTGTYMATSGLDHQLKIFDLRGTFQPLS, and TLPQGAGHLAFSQRGLLVAGMGDVVNIWAGQGKASPPS. A disordered region spans residues 547 to 622; sequence AAFQPKAKQK…AREGGLQVDP (76 aa). The segment covering 571–582 has biased composition (basic and acidic residues); the sequence is VMDQEHRDKVRQ.

In terms of assembly, part of the small subunit (SSU) processome, composed of more than 70 proteins and the RNA chaperone small nucleolar RNA (snoRNA) U3. Interacts with DDX21, NCL, NOP2 and EBNA1BP2.

It is found in the nucleus. The protein resides in the nucleolus. Scaffold component of the nucleolar structure. Required for localization of DDX21 and NCL to the granular compartment of the nucleolus. Part of the small subunit (SSU) processome, first precursor of the small eukaryotic ribosomal subunit. During the assembly of the SSU processome in the nucleolus, many ribosome biogenesis factors, an RNA chaperone and ribosomal proteins associate with the nascent pre-rRNA and work in concert to generate RNA folding, modifications, rearrangements and cleavage as well as targeted degradation of pre-ribosomal RNA by the RNA exosome. The sequence is that of WD repeat-containing protein 46 (Wdr46) from Mus musculus (Mouse).